The primary structure comprises 216 residues: Cyclin-U4-2 (216 aa).

The protein belongs to the cyclin family. Cyclin U/P subfamily. Interacts with CDKA-1. Expressed in roots, stems and flowers. Expressed in the shoot apex, leaf primordia and young leaves.

The polypeptide is Cyclin-U4-2 (CYCU4-2) (Arabidopsis thaliana (Mouse-ear cress)).